The following is a 378-amino-acid chain: Squalene methyltransferase 1 (378 aa).

Residues 17 to 37 (LLTWKGVAGLVVAITLGYLII) traverse the membrane as a helical segment.

Belongs to the class I-like SAM-binding methyltransferase superfamily. Erg6/SMT family.

The protein resides in the microsome membrane. It catalyses the reaction squalene + 2 S-adenosyl-L-methionine = 3,22-dimethyl-1,2,23,24-tetradehydro-2,3,22,23-tetrahydrosqualene + 2 S-adenosyl-L-homocysteine + 2 H(+). Converts squalene to mono- and dimethyl derivatives, but not to tri- and tetramethylated products. Unable to methylate cycloartenol, zymosterol or lanosterol. Methylates both C-3 and C22 positions, but only C-3 position in monomethylated products. Produces mainly dimethylated squalene. The polypeptide is Squalene methyltransferase 1 (TMT-1) (Botryococcus braunii (Green alga)).